We begin with the raw amino-acid sequence, 386 residues long: Patatin-14 (386 aa).

The N-terminal stretch at 1-23 (MATTKSFLILFFMILATTSSTCA) is a signal peptide. The region spanning 32–229 (LSIDGGGIKG…TVGDPALLSL (198 aa)) is the PNPLA domain. Positions 36 to 41 (GGGIKG) match the GXGXXG motif. The short motif at 75–79 (GTSTG) is the GXSXG element. Residue S77 is the Nucleophile of the active site. N115 carries an N-linked (GlcNAc...) asparagine glycan. The Proton acceptor role is filled by D215. The DGA/G motif lies at 215–217 (DGG). The stretch at 321–381 (ENALTGTTTE…LLSDRKKLRA (61 aa)) forms a coiled coil.

Belongs to the patatin family. As to expression, tuber.

Its subcellular location is the vacuole. In terms of biological role, probable lipolytic acyl hydrolase (LAH), an activity which is thought to be involved in the response of tubers to pathogens. This chain is Patatin-14, found in Solanum tuberosum (Potato).